The sequence spans 581 residues: Protein GAMETOPHYTE DEFECTIVE 1 (581 aa).

A compositionally biased stretch (polar residues) spans Ser452–Ser467. The disordered stretch occupies residues Ser452–Met512. Residues Glu496–Met512 show a composition bias toward basic and acidic residues.

This sequence belongs to the eukaryotic/archaeal RNase P protein component 3 family. As to quaternary structure, probable component of nuclear RNase P and RNase MRP ribonucleoproteins. Interacts with POP5. In terms of tissue distribution, mostly expressed in inflorescence and roots, to a lower extent in leaves, and, at low levels, in siliques, seedlings and stems.

It localises to the nucleus. The protein localises to the nucleolus. The protein resides in the mitochondrion. Functionally, probable component of ribonuclease P, a ribonucleoprotein complex that generates mature tRNA molecules by cleaving their 5'-ends. May also be a component of the MRP ribonuclease complex, which cleaves pre-rRNA sequences. Required for female gametophyte development and male competence. This Arabidopsis thaliana (Mouse-ear cress) protein is Protein GAMETOPHYTE DEFECTIVE 1.